The primary structure comprises 516 residues: MERHPASASSRQELGRLLEAVLTSRGQANAVFDILAVLQSEEPEEIEEGVRTCSRLFGTLLEREELFVGSLPSEDTALAGSQGATYKYKVWIRHRYHSCCNRLEELLAHPTFQVKELALKTLMKFVQLEGAKPLEKPQWESHYLFPRTLFRAVVGGLLTPEDDHSLLISHFCEYLEYDDIRYHTMQVATSIMARATSQQPEVSLTLWNNAFTLLSAVSLPLQECELTNFYVKHAQTSDKWKVVHLKEHKKAFQEMWLGFLKHKLPLSLYKKVLVAMHDSILPHLAQPTLMIDFLTSACDVGGAISLLALNGLFILIHKHNLEYPDFYQKLYGLLDPSIFHVKYRARFFHLADLFLSSSHLPAYLVAAFAKRLARLALTAPPEALLMVLPLICNLLRRHPACRVMVHRPQGPELDADPYDPTEKDPARSRALESCLWELQTLQQHYHPEVSKAASVINQVLSVPEVSIAPLLELTAYEIFEQDLKKKMPESVPLEFIPAKGLLGRQDDLCTQFFCLS.

3 helical membrane-spanning segments follow: residues 296 to 316 (SACD…FILI), 347 to 367 (FFHL…LVAA), and 375 to 395 (LALT…CNLL).

It belongs to the CBF/MAK21 family.

Its subcellular location is the nucleus membrane. It localises to the nucleus. The protein resides in the nucleolus. This is Nucleolar complex protein 4 homolog (Noc4l) from Mus musculus (Mouse).